Consider the following 636-residue polypeptide: Bifunctional phosphonoacetaldehyde hydrolase/aminoethylphosphonate transaminase (636 aa).

Positions 1-276 (MKKIYGEKIK…IKSDFVPEND (276 aa)) are phosphonoacetaldehyde hydrolase. The active-site Nucleophile is D15. Positions 15 and 17 each coordinate Mg(2+). K56 acts as the Schiff-base intermediate with substrate in catalysis. D189 contacts Mg(2+). The tract at residues 277–636 (YILLTPGPLS…ADVIEKFINR (360 aa)) is 2-aminoethylphosphonate--pyruvate transaminase. Position 465 is an N6-(pyridoxal phosphate)lysine (K465).

It in the N-terminal section; belongs to the HAD-like hydrolase superfamily. PhnX family. The protein in the C-terminal section; belongs to the class-V pyridoxal-phosphate-dependent aminotransferase family. PhnW subfamily. In terms of assembly, homodimer. Mg(2+) is required as a cofactor. It depends on pyridoxal 5'-phosphate as a cofactor.

It catalyses the reaction (2-aminoethyl)phosphonate + pyruvate = phosphonoacetaldehyde + L-alanine. The enzyme catalyses phosphonoacetaldehyde + H2O = acetaldehyde + phosphate + H(+). Involved in phosphonate degradation. This is Bifunctional phosphonoacetaldehyde hydrolase/aminoethylphosphonate transaminase (phnXW) from Clostridioides difficile (strain 630) (Peptoclostridium difficile).